The primary structure comprises 116 residues: Large ribosomal subunit protein bL20 (116 aa).

The protein belongs to the bacterial ribosomal protein bL20 family.

Binds directly to 23S ribosomal RNA and is necessary for the in vitro assembly process of the 50S ribosomal subunit. It is not involved in the protein synthesizing functions of that subunit. This chain is Large ribosomal subunit protein bL20, found in Bacteroides thetaiotaomicron (strain ATCC 29148 / DSM 2079 / JCM 5827 / CCUG 10774 / NCTC 10582 / VPI-5482 / E50).